The chain runs to 420 residues: Tyrosine--tRNA ligase (420 aa).

Tyr-33 is an L-tyrosine binding site. Positions Pro-38–His-47 match the 'HIGH' region motif. Tyr-167 and Gln-171 together coordinate L-tyrosine. Positions Lys-227–Ser-231 match the 'KMSKS' region motif. Residue Lys-230 coordinates ATP. The 67-residue stretch at Pro-352–Tyr-418 folds into the S4 RNA-binding domain.

Belongs to the class-I aminoacyl-tRNA synthetase family. TyrS type 1 subfamily. Homodimer.

It localises to the cytoplasm. It catalyses the reaction tRNA(Tyr) + L-tyrosine + ATP = L-tyrosyl-tRNA(Tyr) + AMP + diphosphate + H(+). In terms of biological role, catalyzes the attachment of tyrosine to tRNA(Tyr) in a two-step reaction: tyrosine is first activated by ATP to form Tyr-AMP and then transferred to the acceptor end of tRNA(Tyr). This is Tyrosine--tRNA ligase from Corynebacterium diphtheriae (strain ATCC 700971 / NCTC 13129 / Biotype gravis).